A 306-amino-acid polypeptide reads, in one-letter code: Porphobilinogen deaminase (306 aa).

The residue at position 239 (cysteine 239) is an S-(dipyrrolylmethanemethyl)cysteine.

The protein belongs to the HMBS family. Monomer. The cofactor is dipyrromethane.

The enzyme catalyses 4 porphobilinogen + H2O = hydroxymethylbilane + 4 NH4(+). Its pathway is porphyrin-containing compound metabolism; protoporphyrin-IX biosynthesis; coproporphyrinogen-III from 5-aminolevulinate: step 2/4. In terms of biological role, tetrapolymerization of the monopyrrole PBG into the hydroxymethylbilane pre-uroporphyrinogen in several discrete steps. This Helicobacter acinonychis (strain Sheeba) protein is Porphobilinogen deaminase.